Here is a 241-residue protein sequence, read N- to C-terminus: DNA repair protein RecO (241 aa).

The protein belongs to the RecO family.

In terms of biological role, involved in DNA repair and RecF pathway recombination. This Rickettsia canadensis (strain McKiel) protein is DNA repair protein RecO.